A 1273-amino-acid polypeptide reads, in one-letter code: MTRSSLFKELADIAKERIMIIDGAMGTMIQREYMEEHDFRGEILKDHDKPLKGNNDLLSITRPDIIYKIHKLYLEAGADFIETNTFSGTTIAQADYHCEHLVHEINYQSALVARRACDDVGAATGIRRYVCGAIGPTNRTLSISPSVEKPDFRNVTFQELVKAYGDQARSLIQGGVDVLLVETVFDSANAKAALFAIRTLFEDEGVPEIPVFLSGTIVDMSGRTLSGQTGEAFLVSTKQGKPIAVGLNCALGAKDMRQFVQNMSLWSDTLILCYPNAGLPNALGGYDETPEEMAEVLREFAQDGLVNIIGGCCGTTPDHINAMYKAVQGISPRVPPADPHAGKMLLSGLEPSIVGPETNFVNIGERCNVAGSRRFCNLIKNENYDTAIDVARVQVDSGAQILDVNMDDGLLDGPYAMSKFLRLISSEPDVAKIPVCIDSSDFDVIIAGLESTQGKCVVNSISLKEGEEKFKERARIVKRYGAAVVVMAFDEEGQAAETERKFEICERSYRILTEEVGFNPNDIIFDANILTIATGMDEHANYGMYFIEATRMIRENLPGAHVSGGVSNISFSFRGMEAIREAMHSVFLFYAIKAGMDMGIVNAGALPVYEDIDKPLLQLLEDLLFNRDPEATEKLLVAAQEMKKDGKKADTKTDEWRNTSVEERLKFALVKGIDQFVVADTEEARQNTEKYPRPLNVIERPLMDGMAVVGELFGAGKMFLPQVIKSARVMKKAVAHLLPFMDAERQANIEKMGLDEDESPYQGTVVIATVKGDVHDIGKNIVAVVLGCNNFKVVDLGVMTPCENIIKAAIEEKADFIGLSGLITPSLDEMVHVAKEMNRVGLKIPLLIGGATTSKTHTAVKIAPRYPHPVVHCLDASKSVVVCSSLSDMTVRDAFLQDLNEDYEDVRTKMCLVSYLNHFFITEHYESLKDRRFVALGKTREKKFNIDWNKFSPVKPSFIGRREFQNFDFKELIPYIDWKPFFDVWQLRGKYPNRSYPKIFDDADVGGEAKRVFDDAQTWLKKLIDEKVLTANAVVSFLPAASEGDDIHVYDPETGNKLDTFYGLRQQSGREHDQSHFCLSDFIRPLKIGVPDDYLGLFACTAGLGAEEYCKVLEENHDDYASIMVKALADRLAEAYAEYLHKEVRVNLWGYSTNEQLTETDLLSIKYEGIRPACGYPSQPDHTEKRTLWKLLEAEKNGIVLTEHLAMLPAASVSGLYFANPQSQYFAVGKIDEDQVAFIYVRSKNVTDYAARKNVPKEEVERWLSPIIGYELD.

The region spanning Phe7–Val327 is the Hcy-binding domain. Zn(2+) contacts are provided by Cys249, Cys312, and Cys313. The Pterin-binding domain maps to Phe360–Glu621. In terms of domain architecture, B12-binding N-terminal spans Lys652–Ile749. Methylcob(III)alamin is bound by residues Glu699, Gly772–Asp776, His775, Ser820, Thr824, and Ala876. Positions Gln762–Gln897 constitute a B12-binding domain. An AdoMet activation domain is found at Ser927–Asp1273. S-adenosyl-L-methionine is bound by residues Asp977, Arg1171, and Tyr1225–Phe1226.

This sequence belongs to the vitamin-B12 dependent methionine synthase family. The cofactor is methylcob(III)alamin. Zn(2+) is required as a cofactor.

It carries out the reaction (6S)-5-methyl-5,6,7,8-tetrahydrofolate + L-homocysteine = (6S)-5,6,7,8-tetrahydrofolate + L-methionine. It participates in amino-acid biosynthesis; L-methionine biosynthesis via de novo pathway; L-methionine from L-homocysteine (MetH route): step 1/1. Its function is as follows. Catalyzes the transfer of a methyl group from methyl-cobalamin to homocysteine, yielding enzyme-bound cob(I)alamin and methionine. Subsequently, remethylates the cofactor using methyltetrahydrofolate. The polypeptide is Probable methionine synthase (metr-1) (Caenorhabditis briggsae).